Here is an 807-residue protein sequence, read N- to C-terminus: Glycerol-3-phosphate acyltransferase (807 aa).

Residues 308-313 carry the HXXXXD motif motif; the sequence is CHRSHM.

The protein belongs to the GPAT/DAPAT family.

It localises to the cell inner membrane. The catalysed reaction is sn-glycerol 3-phosphate + an acyl-CoA = a 1-acyl-sn-glycero-3-phosphate + CoA. The protein operates within phospholipid metabolism; CDP-diacylglycerol biosynthesis; CDP-diacylglycerol from sn-glycerol 3-phosphate: step 1/3. The sequence is that of Glycerol-3-phosphate acyltransferase from Shewanella baltica (strain OS223).